The following is a 571-amino-acid chain: Putative pyruvate decarboxylase C13A11.06 (571 aa).

Residues aspartate 29 and histidine 118 each coordinate pyruvate. Thiamine diphosphate-binding positions include threonine 395 and 418–420 (GSI). Mg(2+) is bound at residue aspartate 450. Residues 451–452 (GS) and 477–482 (NDGYTI) contribute to the thiamine diphosphate site. Mg(2+) is bound by residues asparagine 477 and glycine 479. Residue glutamate 483 coordinates pyruvate.

The protein belongs to the TPP enzyme family. In terms of assembly, homotetramer. The cofactor is Mg(2+). Thiamine diphosphate is required as a cofactor.

It catalyses the reaction a 2-oxocarboxylate + H(+) = an aldehyde + CO2. The catalysed reaction is pyruvate + H(+) = acetaldehyde + CO2. The chain is Putative pyruvate decarboxylase C13A11.06 from Schizosaccharomyces pombe (strain 972 / ATCC 24843) (Fission yeast).